Reading from the N-terminus, the 496-residue chain is Glutamyl-tRNA(Gln) amidotransferase subunit A (496 aa).

Residues Lys75 and Ser150 each act as charge relay system in the active site. The active-site Acyl-ester intermediate is the Ser174.

This sequence belongs to the amidase family. GatA subfamily. In terms of assembly, heterotrimer of A, B and C subunits.

It catalyses the reaction L-glutamyl-tRNA(Gln) + L-glutamine + ATP + H2O = L-glutaminyl-tRNA(Gln) + L-glutamate + ADP + phosphate + H(+). Its function is as follows. Allows the formation of correctly charged Gln-tRNA(Gln) through the transamidation of misacylated Glu-tRNA(Gln) in organisms which lack glutaminyl-tRNA synthetase. The reaction takes place in the presence of glutamine and ATP through an activated gamma-phospho-Glu-tRNA(Gln). This is Glutamyl-tRNA(Gln) amidotransferase subunit A from Burkholderia mallei (strain NCTC 10247).